The sequence spans 35 residues: Photosystem II reaction center protein T (35 aa).

Residues 3–23 (ALVYTFLLVSTLGIIFFAIFF) traverse the membrane as a helical segment.

The protein belongs to the PsbT family. In terms of assembly, PSII is composed of 1 copy each of membrane proteins PsbA, PsbB, PsbC, PsbD, PsbE, PsbF, PsbH, PsbI, PsbJ, PsbK, PsbL, PsbM, PsbT, PsbY, PsbZ, Psb30/Ycf12, at least 3 peripheral proteins of the oxygen-evolving complex and a large number of cofactors. It forms dimeric complexes.

The protein localises to the plastid. It localises to the chloroplast thylakoid membrane. Its function is as follows. Found at the monomer-monomer interface of the photosystem II (PS II) dimer, plays a role in assembly and dimerization of PSII. PSII is a light-driven water plastoquinone oxidoreductase, using light energy to abstract electrons from H(2)O, generating a proton gradient subsequently used for ATP formation. The protein is Photosystem II reaction center protein T of Gossypium barbadense (Sea Island cotton).